Here is a 182-residue protein sequence, read N- to C-terminus: ADP-ribosylation factor-like protein 3 (182 aa).

The N-myristoyl glycine moiety is linked to residue glycine 2. Residue serine 5 is modified to Phosphoserine. GTP-binding positions include 24-31 (GLDNAGKT), threonine 48, 67-71 (DIGGQ), glycine 70, 126-129 (NKQD), and 159-161 (SAL). Residues threonine 31 and threonine 48 each coordinate Mg(2+).

This sequence belongs to the small GTPase superfamily. Arf family. In terms of assembly, found in a complex with ARL3, RP2 and UNC119 (or UNC119B); RP2 induces hydrolysis of GTP ARL3 in the complex, leading to the release of UNC119 (or UNC119B). Interacts with RP2; interaction is direct and stimulated with the activated GTP-bound form of ARL3. Interacts with SYS1. Interacts with ARL2BP; the GTP-bound form interacts with ARL2BP. Microtubule-associated protein. Does not interact with TBCC. Interacts with RP2. Interacts with PDE6D; the interaction occurs specifically with the GTP-bound form of ARL3. Interacts with GGA1; the interaction recruits PKD1:PKD2 complex to trans-Golgi network and is required for ciliary targeting of PKD1:PKD2 complex. Interacts with DNAAF9.

Its subcellular location is the golgi apparatus membrane. It is found in the cytoplasm. It localises to the cytoskeleton. The protein resides in the spindle. The protein localises to the nucleus. Its subcellular location is the microtubule organizing center. It is found in the centrosome. It localises to the cell projection. The protein resides in the cilium. In terms of biological role, small GTP-binding protein which cycles between an inactive GDP-bound and an active GTP-bound form, and the rate of cycling is regulated by guanine nucleotide exchange factors (GEF) and GTPase-activating proteins (GAP). Required for normal cytokinesis and cilia signaling. Required for targeting proteins to the cilium, including myristoylated NPHP3 and prenylated INPP5E. Targets NPHP3 to the ciliary membrane by releasing myristoylated NPHP3 from UNC119B cargo adapter into the cilium. Requires assistance from GTPase-activating proteins (GAPs) like RP2 and PDE6D, in order to cycle between inactive GDP-bound and active GTP-bound forms. Required for PKD1:PKD2 complex targeting from the trans-Golgi network to the cilium. This chain is ADP-ribosylation factor-like protein 3, found in Mus musculus (Mouse).